A 1714-amino-acid polypeptide reads, in one-letter code: Bifunctional glutamate/proline--tRNA ligase (1714 aa).

The tract at residues 166–191 (DAKVKRSPQSSKEQTPAKTGERKQEG) is disordered. Residues 170–754 (KRSPQSSKEQ…ASELDSQISQ (585 aa)) form a glutamate--tRNA ligase region. Polar residues predominate over residues 172–182 (SPQSSKEQTPA). A 'HIGH' region motif is present at residues 209-220 (PPEASGYLHIGH). The short motif at 438–442 (VLSKR) is the 'KMSKS' region element. Disordered stretches follow at residues 718-754 (PTSGLKVNAPDAKATKKASSPVSSSGQASELDSQISQ), 791-817 (GKDWKPGQTSASSAPVPAASSSSANDA), and 943-962 (GTTAPAPAAAPVKVKQEKNP). Low complexity-rich tracts occupy residues 734–746 (KASSPVSSSGQAS) and 800–817 (SASSAPVPAASSSSANDA). WHEP-TRS domains follow at residues 744–800 (QASE…GQTS), 816–872 (DAVS…GTVP), 890–946 (SVAQ…GTTA), 969–1025 (TVNT…GTVA), and 1044–1100 (DVGS…DAKS). The 6 X 57 AA approximate repeats stretch occupies residues 755-1201 (QGDLVRDLKS…KPAKPVKKEP (447 aa)). Disordered stretches follow at residues 1093 to 1119 (DWTPDAKSEPAVVKKEASPVSMASPAK) and 1168 to 1210 (FPVA…GAVK). Residues 1094–1109 (WTPDAKSEPAVVKKEA) show a composition bias toward basic and acidic residues. Serine 1110 bears the Phosphoserine mark. A WHEP-TRS 6 domain is found at 1118-1174 (AKDELTQEINAQGEKVRAAKGNKAAKEVIDAEVAKLLALKAKYKEVTGTDFPVAGRG). The span at 1172–1181 (GRGGGGGGGS) shows a compositional bias: gly residues. Positions 1207–1714 (GAVKKQTRLG…KFYTLFGRSY (508 aa)) are proline--tRNA ligase. Residues 1322 to 1324 (TSE) and arginine 1353 each bind L-proline. Residues arginine 1353, glutamate 1355, arginine 1364, threonine 1365, glutamine 1438, and threonine 1441 each contribute to the ATP site. A Mg(2+)-binding site is contributed by glutamine 1438. Histidine 1443 is an L-proline binding site. Threonine 1476 and arginine 1478 together coordinate ATP. 3 residues coordinate Zn(2+): cysteine 1648, cysteine 1653, and cysteine 1695.

The protein in the N-terminal section; belongs to the class-I aminoacyl-tRNA synthetase family. Glutamate--tRNA ligase type 2 subfamily. This sequence in the C-terminal section; belongs to the class-II aminoacyl-tRNA synthetase family. Component of the multisynthetase complex which is comprised of a bifunctional glutamyl-prolyl-tRNA synthetase, the monospecific isoleucyl, leucyl, glutaminyl, methionyl, lysyl, arginyl, and aspartyl-tRNA synthetases as well as three auxiliary proteins, p18, p48 and p43.

It carries out the reaction tRNA(Glu) + L-glutamate + ATP = L-glutamyl-tRNA(Glu) + AMP + diphosphate. The catalysed reaction is tRNA(Pro) + L-proline + ATP = L-prolyl-tRNA(Pro) + AMP + diphosphate. Its function is as follows. Catalyzes the attachment of both L-glutamate and L-proline to their cognate tRNAs in a two-step reaction where the amino acid is first activated by ATP to form a covalent intermediate with AMP. Subsequently, the activated amino acid is transferred to the acceptor end of the cognate tRNA to form L-glutamyl-tRNA(Glu) and L-prolyl-tRNA(Pro). This Drosophila melanogaster (Fruit fly) protein is Bifunctional glutamate/proline--tRNA ligase.